Reading from the N-terminus, the 634-residue chain is Sodium-dependent neutral amino acid transporter B(0)AT1 (634 aa).

The Cytoplasmic segment spans residues 1–41 (MVRLVLPNPGLEDRIPSLDELEVIEKEEASSRPKWDNKAQY). Ser-17 is modified (phosphoserine). Residues 42–62 (MLTCVGFCVGLGNVWRFPYLC) traverse the membrane as a helical segment. Residues 63–65 (QSH) are Extracellular-facing. The chain crosses the membrane as a helical span at residues 66–86 (GGGAFMIPFLILLVLEGIPLL). The Cytoplasmic segment spans residues 87–119 (HLEFAIGQRLRKGSVGVWSSIHPALKGVGIASM). A helical transmembrane segment spans residues 120 to 140 (FVSFMVGLYYNTIIAWVMWYF). The Extracellular segment spans residues 141 to 192 (FNSFQEPLPWSECPLNQNQTGYVEECAKSSSVDYFWYRETLNISTSISDSGS). Asn-158 and Asn-182 each carry an N-linked (GlcNAc...) asparagine glycan. The helical transmembrane segment at 193–213 (IQWWILLCLTCAWSVLYVCTI) threads the bilayer. Topologically, residues 214–221 (RGIETTGK) are cytoplasmic. Residues 222 to 242 (AVYITSTLPYVVLTIFLIRGL) traverse the membrane as a helical segment. The Extracellular portion of the chain corresponds to 243–268 (TLKGATNGIVFLFTPNITELSNPNTW). N-linked (GlcNAc...) asparagine glycosylation occurs at Asn-258. The chain crosses the membrane as a helical span at residues 269 to 289 (LDAGAQVFYSFSLAFGGLISF). The Cytoplasmic portion of the chain corresponds to 290–304 (SSYNSVHNNCEMDSV). Residues 305–325 (IVSIINGFTSVYAATVVYSII) traverse the membrane as a helical segment. Residues 326-413 (GFRATERFDD…TEAITKMPVS (88 aa)) lie on the Extracellular side of the membrane. 2 N-linked (GlcNAc...) asparagine glycosylation sites follow: Asn-354 and Asn-368. A helical membrane pass occupies residues 414-434 (PLWSVLFFIMLFCLGLSSMFG). The Cytoplasmic portion of the chain corresponds to 435 to 456 (NMEGVVVPLQDLNITPKKWPKE). A helical transmembrane segment spans residues 457 to 477 (LLTGLICLGTYLIAFIFTLNS). Residues 478 to 490 (GQYWLSLLDSYAG) lie on the Extracellular side of the membrane. Residues 491–511 (SIPLLIIAFCEMFAVVYVYGV) form a helical membrane-spanning segment. Over 512–531 (DRFNKDIEFMIGHKPNIFWQ) the chain is Cytoplasmic. The helical transmembrane segment at 532–552 (VTWRVVSPLIMLVIFLFFFVI) threads the bilayer. Over 553-581 (EVNKQLMYSVWDPDYEEFPKSQKVPYPDW) the chain is Extracellular. The helical transmembrane segment at 582–602 (VYAVVVIVAGVPCLTIPCFAI) threads the bilayer. Topologically, residues 603-634 (YKLIRNYCQKSGDQHGLVNALSTASVNGDLKN) are cytoplasmic. Position 627 is a phosphoserine (Ser-627).

It belongs to the sodium:neurotransmitter symporter (SNF) (TC 2.A.22) family. SLC6A19 subfamily. In terms of assembly, interacts in a tissue-specific manner with ACE2 in small intestine and with CLTRN in the kidney. Interacts with CLTRN; this interaction is required for trafficking of SLC6A19 to the plasma membrane and for its catalytic activation in kidneys. Interacts with ACE2; this interaction is required for trafficking of SLC6A19 to the plasma membrane and for its catalytic activation in intestine. Interacts with ANPEP; the interaction positively regulates its amino acid transporter activity.

It is found in the membrane. It carries out the reaction L-alanine(in) + Na(+)(in) = L-alanine(out) + Na(+)(out). The catalysed reaction is L-cysteine(in) + Na(+)(in) = L-cysteine(out) + Na(+)(out). The enzyme catalyses L-glutamine(in) + Na(+)(in) = L-glutamine(out) + Na(+)(out). It catalyses the reaction glycine(in) + Na(+)(in) = glycine(out) + Na(+)(out). It carries out the reaction L-isoleucine(in) + Na(+)(in) = L-isoleucine(out) + Na(+)(out). The catalysed reaction is L-leucine(in) + Na(+)(in) = L-leucine(out) + Na(+)(out). The enzyme catalyses L-methionine(in) + Na(+)(in) = L-methionine(out) + Na(+)(out). It catalyses the reaction L-phenylalanine(in) + Na(+)(in) = L-phenylalanine(out) + Na(+)(out). It carries out the reaction L-serine(in) + Na(+)(in) = L-serine(out) + Na(+)(out). The catalysed reaction is L-tryptophan(in) + Na(+)(in) = L-tryptophan(out) + Na(+)(out). The enzyme catalyses L-tyrosine(in) + Na(+)(in) = L-tyrosine(out) + Na(+)(out). It catalyses the reaction L-valine(in) + Na(+)(in) = L-valine(out) + Na(+)(out). In terms of biological role, transporter that mediates resorption of neutral amino acids across the apical membrane of renal and intestinal epithelial cells. This uptake is sodium-dependent and chloride-independent. Requires CLTRN in kidney or ACE2 in intestine for cell surface expression and amino acid transporter activity. This Rattus norvegicus (Rat) protein is Sodium-dependent neutral amino acid transporter B(0)AT1.